Reading from the N-terminus, the 365-residue chain is A-type ATP synthase subunit C (365 aa).

It belongs to the V-ATPase V0D/AC39 subunit family. As to quaternary structure, has multiple subunits with at least A(3), B(3), C, D, E, F, H, I and proteolipid K(x).

It localises to the cell membrane. Functionally, component of the A-type ATP synthase that produces ATP from ADP in the presence of a proton gradient across the membrane. The sequence is that of A-type ATP synthase subunit C from Thermococcus kodakarensis (strain ATCC BAA-918 / JCM 12380 / KOD1) (Pyrococcus kodakaraensis (strain KOD1)).